The following is a 134-amino-acid chain: Small ribosomal subunit protein bS16 (134 aa).

The segment at 105-134 (EAERRQKRLTAKTRRRQAKKAAEAAGSAEG) is disordered. Residues 109-123 (RQKRLTAKTRRRQAK) are compositionally biased toward basic residues.

Belongs to the bacterial ribosomal protein bS16 family.

In Chlorobaculum parvum (strain DSM 263 / NCIMB 8327) (Chlorobium vibrioforme subsp. thiosulfatophilum), this protein is Small ribosomal subunit protein bS16.